Here is a 205-residue protein sequence, read N- to C-terminus: E3 ubiquitin-protein ligase complex slx8-rfp subunit rfp2 (205 aa).

An RING-type; degenerate zinc finger spans residues 147-190 (CAKCGNELVSDEKKSIFAAKCGHLFCSTCAKELRKKTVPCPVQH).

As to quaternary structure, part of an E3 ubiquitin complex including rfp1, rfp2 and slx8. Interacts with slx8.

Its subcellular location is the nucleus. The catalysed reaction is S-ubiquitinyl-[E2 ubiquitin-conjugating enzyme]-L-cysteine + [acceptor protein]-L-lysine = [E2 ubiquitin-conjugating enzyme]-L-cysteine + N(6)-ubiquitinyl-[acceptor protein]-L-lysine.. Its pathway is protein modification; protein ubiquitination. Functionally, mediates ubiquitination and subsequent desumoylation/degradation of sumoylated proteins and proteins containing SUMO-like domains. Involved in maintaining genome stability where it acts in the cellular response to DNA damage. This chain is E3 ubiquitin-protein ligase complex slx8-rfp subunit rfp2 (rfp2), found in Schizosaccharomyces pombe (strain 972 / ATCC 24843) (Fission yeast).